Here is a 1177-residue protein sequence, read N- to C-terminus: MAGIFKEFFFSTEDLPEVILTLSLISSIGAFLNRHLEDFPIPVPVILFLLGCSFEVLSFTSSQVQRYANAIQWMSPDLFFRIFTPVVFFTTAFDMDTYMLQKLFWQILLISIPGFLVNYILVLWHLASVNQLLLKPTQWLLFSAILVSSDPMLTAAAIRDLGLSRSLISLINGESLMTSVISLITFTSIMDFDQRLQSKRNHTLAEEIVGGICSYIIASFLFGILSSKLIQFWMSTVFGDDVNHISLIFSILYLIFYICELVGMSGIFTLAIVGLLLNSTSFKAAIEETLLLEFWTFLSRIAFLMVFTFFGLLIPAHTYLYIEFVDIYYSLNIYLTLIVLRFLTLLLISPVLSRVGHEFSWRWIFIMVCSEMKGMPNINMALLLAYSDLYFGSDKEKSQILFHGVLVCLITLVVNRFILPVAVTILGLRDATSTKYKSVCCTFQHFQELTKSAASALKFDKDLANADWNMIEKAITLENPYMLNEEETTEHQKVKCPHCNKEIDEIFNTEAMELANRRLLSAQIASYQRQYRNEILSQSAVQVLVGAAESFGEKKGKCMSLDTIKNYSESQKTVTFARKLLLNWVYNTRKEKEGPSKYFFFRICHTIVFTEEFEHVGYLVILMNIFPFIISWISQLNVIYHSELKHTNYCFLTLYILEALLKIAAMRKDFFSHAWNIFELAITLIGILHVILIEIDTIKYIFNETEVIVFIKVVQFFRILRIFKLIAPKLLQIIDKRMSHQKTFWYGILKGYVQGEADIMTIIDQITSSKQIKQMLLKQVIRNMEHAIKELGYLEYDHPEIAVTVKTKEEINVMLNMATEILKAFGLKGIISKTEGAGINKLIMAKKKEVLDSQSIIRPLTVEEVLYHIPWLDKNKDYINFIQEKAKVVTFDCGNDIFEEGDEPKGIYIIISGMVKLEKSKPGLGIDQMVESKEKDFPIIDTDYMLSGEIIGEINCLTNEPMKYSATCKTVVETCFIPKTHLYDAFEQCSPLIKQKMWLKLGLAITARKIREHLSYEDWNYNMQLKLSNIYVVDIPMSTKTDIYDENLIYVILIHGAVEDCLLRKTYRAPFLIPITCHQIQSIEDFTKVVIIQTPINMKTFRRNIRKFVPKHKSYLTPGLIGSVGTLEEGIQEERNVKEDGAHSAATARSPQPCSLLGTKFNCKESPRINLRKVRKE.

Over 1–17 the chain is Extracellular; sequence MAGIFKEFFFSTEDLPE. The helical transmembrane segment at 18–37 threads the bilayer; sequence VILTLSLISSIGAFLNRHLE. The Cytoplasmic portion of the chain corresponds to 38–42; that stretch reads DFPIP. A helical transmembrane segment spans residues 43–60; the sequence is VPVILFLLGCSFEVLSFT. Residues 61 to 76 lie on the Extracellular side of the membrane; the sequence is SSQVQRYANAIQWMSP. Residues 77-93 form a helical membrane-spanning segment; that stretch reads DLFFRIFTPVVFFTTAF. Residues 94–103 are Cytoplasmic-facing; that stretch reads DMDTYMLQKL. A helical transmembrane segment spans residues 104-129; that stretch reads FWQILLISIPGFLVNYILVLWHLASV. The tract at residues 104–191 is transport core domain; it reads FWQILLISIP…SLITFTSIMD (88 aa). Over 130–135 the chain is Extracellular; the sequence is NQLLLK. The helical transmembrane segment at 136–161 threads the bilayer; sequence PTQWLLFSAILVSSDPMLTAAAIRDL. The Cytoplasmic segment spans residues 162-164; it reads GLS. Residues 165 to 190 traverse the membrane as a helical segment; sequence RSLISLINGESLMTSVISLITFTSIM. At 191–204 the chain is on the extracellular side; it reads DFDQRLQSKRNHTL. The helical transmembrane segment at 205–236 threads the bilayer; it reads AEEIVGGICSYIIASFLFGILSSKLIQFWMST. Residues 237-240 are Cytoplasmic-facing; the sequence is VFGD. A helical membrane pass occupies residues 241-262; sequence DVNHISLIFSILYLIFYICELV. Residues 263 to 265 lie on the Extracellular side of the membrane; it reads GMS. The helical transmembrane segment at 266-279 threads the bilayer; sequence GIFTLAIVGLLLNS. Topologically, residues 280–286 are cytoplasmic; the sequence is TSFKAAI. Residues 287 to 319 form a helical membrane-spanning segment; that stretch reads EETLLLEFWTFLSRIAFLMVFTFFGLLIPAHTY. The Extracellular segment spans residues 320–324; that stretch reads LYIEF. The chain crosses the membrane as a helical span at residues 325–354; it reads VDIYYSLNIYLTLIVLRFLTLLLISPVLSR. A transport core domain region spans residues 325–426; sequence VDIYYSLNIY…FILPVAVTIL (102 aa). The Cytoplasmic portion of the chain corresponds to 355–360; that stretch reads VGHEFS. The chain crosses the membrane as a helical span at residues 361-391; the sequence is WRWIFIMVCSEMKGMPNINMALLLAYSDLYF. Residues 392 to 395 lie on the Extracellular side of the membrane; sequence GSDK. Residues 396-426 form a helical membrane-spanning segment; sequence EKSQILFHGVLVCLITLVVNRFILPVAVTIL. Residues 427 to 612 lie on the Cytoplasmic side of the membrane; it reads GLRDATSTKY…ICHTIVFTEE (186 aa). An ion transport-like region spans residues 598–678; that stretch reads YFFFRICHTI…DFFSHAWNIF (81 aa). A helical membrane pass occupies residues 613–633; that stretch reads FEHVGYLVILMNIFPFIISWI. Over 634–637 the chain is Extracellular; the sequence is SQLN. A helical membrane pass occupies residues 638–664; the sequence is VIYHSELKHTNYCFLTLYILEALLKIA. The Cytoplasmic portion of the chain corresponds to 665–671; that stretch reads AMRKDFF. A helical transmembrane segment spans residues 672 to 696; sequence SHAWNIFELAITLIGILHVILIEID. Over 697–704 the chain is Extracellular; sequence TIKYIFNE. Residues 705 to 731 traverse the membrane as a helical segment; it reads TEVIVFIKVVQFFRILRIFKLIAPKLL. Residues 732-1177 are Cytoplasmic-facing; sequence QIIDKRMSHQ…RINLRKVRKE (446 aa).

The protein belongs to the monovalent cation:proton antiporter 1 (CPA1) transporter (TC 2.A.36) family. As to quaternary structure, interacts with soluble adenylyl cyclase (sAC). As to expression, sperm.

It localises to the cell projection. The protein localises to the cilium. It is found in the flagellum membrane. Its function is as follows. Sperm-specific solute carrier involved in intracellular pH regulation of spermatozoa. Required for sperm motility and fertility. Involved in sperm cell hyperactivation, a step needed for sperm motility which is essential late in the preparation of sperm for fertilization. Required for the expression and bicarbonate regulation of the soluble adenylyl cyclase (sAC). This chain is Solute carrier family 9 member C1 (SLC9C1), found in Homo sapiens (Human).